Here is a 183-residue protein sequence, read N- to C-terminus: 16 kDa gamma-zein (183 aa).

The first 19 residues, 1-19, serve as a signal peptide directing secretion; that stretch reads MKVLIVALALLALAASAAS.

As to quaternary structure, interacts with OP10 (via N-terminus).

It localises to the vacuole. Its subcellular location is the aleurone grain. Zeins are major seed storage proteins. This chain is 16 kDa gamma-zein, found in Zea mays (Maize).